The primary structure comprises 680 residues: WD repeat-containing protein 48 homolog (680 aa).

8 WD repeats span residues 26–65 (QHRN…SEKY), 71–110 (HHND…CMST), 113–152 (THRD…ALTA), 164–203 (GSKD…RSMK), 206–245 (GHTE…CVQT), 248–287 (VHKE…NKTL), 290–329 (EEQA…RCTM), and 350–389 (KGGA…KKEQ). The disordered stretch occupies residues 592 to 616 (ETTPSGGNANNSLQNSQSDANSEGS).

This sequence belongs to the WD repeat WDR48 family. In terms of assembly, catalytic component of the Usp12-46 deubiquitylase complex consisting of Usp12-46, Wdr20 and Uaf1; regulatory subunit that, together wtih Wdr20, stabilizes Usp12-46. The Usp12-46 deubiquitylase complex associates with arr/arrow; the interaction leads to deubiquitination and stabilization of arr/arrow.

Functionally, regulatory component of the Usp12-46 deubiquitylase complex. activates deubiquitination by increasing the catalytic turnover without increasing the affinity of deubiquitinating enzymes for the substrate. The complex deubiquitylates the wg/wingless-signaling receptor arr/arrow, which stabilizes the receptor and increases its concentration at the cell surface; this enhances the sensitivity of cells to wg/wingless-signal stimulation. This increases the amplitude and spatial range of the signaling response to the wg/wingless morphogen gradient, facilitating the precise concentration-dependent regulation of its target genes. Together with Wdr20 and Usp12-46 required for wg/wingless-mediated signaling in the wing imaginal disc and for wg/wingless-dependent regulation of intestinal stem cell proliferation. This Drosophila yakuba (Fruit fly) protein is WD repeat-containing protein 48 homolog.